The sequence spans 297 residues: NADH-ubiquinone oxidoreductase chain 1 (297 aa).

The next 9 helical transmembrane spans lie at 1 to 21 (MKSL…TLAE), 34 to 54 (PNHV…KLIL), 66 to 86 (WLFV…WLVI), 99 to 119 (LSIL…IYTG), 139 to 159 (VSYE…GATL), 170 to 190 (GTVL…AALA), 206 to 228 (LVAG…GEYA), 235 to 257 (TVLN…IWIR), and 277 to 297 (LPFL…LDLF).

It belongs to the complex I subunit 1 family.

The protein localises to the mitochondrion inner membrane. The enzyme catalyses a ubiquinone + NADH + 5 H(+)(in) = a ubiquinol + NAD(+) + 4 H(+)(out). In terms of biological role, core subunit of the mitochondrial membrane respiratory chain NADH dehydrogenase (Complex I) that is believed to belong to the minimal assembly required for catalysis. Complex I functions in the transfer of electrons from NADH to the respiratory chain. The immediate electron acceptor for the enzyme is believed to be ubiquinone. This Hyaloraphidium curvatum (Lower fungus) protein is NADH-ubiquinone oxidoreductase chain 1.